The chain runs to 395 residues: Flap endonuclease 1 (395 aa).

Positions 1 to 108 (MGILGLSKLL…DELEMRRQKA (108 aa)) are N-domain. Residue aspartate 34 participates in Mg(2+) binding. Arginine 74 contributes to the DNA binding site. Aspartate 90 serves as a coordination point for Mg(2+). Positions 116–136 (EKAKDAGDDEMMEKMSKRTVR) are disordered. The interval 126 to 257 (MMEKMSKRTV…QKAWEGIQRY (132 aa)) is I-domain. Residues glutamate 162, glutamate 164, aspartate 183, and aspartate 185 each coordinate Mg(2+). DNA is bound at residue glutamate 162. 2 residues coordinate DNA: glycine 235 and aspartate 237. Aspartate 237 contributes to the Mg(2+) binding site. Residues 340–348 (TQGRLDSFF) form an interaction with PCNA region.

The protein belongs to the XPG/RAD2 endonuclease family. FEN1 subfamily. Interacts with PCNA. Three molecules of FEN1 bind to one PCNA trimer with each molecule binding to one PCNA monomer. PCNA stimulates the nuclease activity without altering cleavage specificity. Mg(2+) serves as cofactor. In terms of processing, phosphorylated. Phosphorylation upon DNA damage induces relocalization to the nuclear plasma.

Its subcellular location is the nucleus. It is found in the nucleolus. The protein resides in the nucleoplasm. The protein localises to the mitochondrion. Its function is as follows. Structure-specific nuclease with 5'-flap endonuclease and 5'-3' exonuclease activities involved in DNA replication and repair. During DNA replication, cleaves the 5'-overhanging flap structure that is generated by displacement synthesis when DNA polymerase encounters the 5'-end of a downstream Okazaki fragment. It enters the flap from the 5'-end and then tracks to cleave the flap base, leaving a nick for ligation. Also involved in the long patch base excision repair (LP-BER) pathway, by cleaving within the apurinic/apyrimidinic (AP) site-terminated flap. Acts as a genome stabilization factor that prevents flaps from equilibrating into structures that lead to duplications and deletions. Also possesses 5'-3' exonuclease activity on nicked or gapped double-stranded DNA, and exhibits RNase H activity. Also involved in replication and repair of rDNA and in repairing mitochondrial DNA. The polypeptide is Flap endonuclease 1 (Leishmania major).